A 156-amino-acid polypeptide reads, in one-letter code: Deoxyuridine 5'-triphosphate nucleotidohydrolase (156 aa).

This sequence belongs to the dCTP deaminase family. Archaeal dUTPase subfamily. In terms of assembly, homotrimer.

The catalysed reaction is dUTP + H2O = dUMP + diphosphate + H(+). It functions in the pathway pyrimidine metabolism; dUMP biosynthesis; dUMP from dCTP (dUTP route): step 2/2. Its function is as follows. This enzyme is involved in nucleotide metabolism: it produces dUMP, the immediate precursor of thymidine nucleotides and it decreases the intracellular concentration of dUTP so that uracil cannot be incorporated into DNA. This Methanocaldococcus jannaschii (strain ATCC 43067 / DSM 2661 / JAL-1 / JCM 10045 / NBRC 100440) (Methanococcus jannaschii) protein is Deoxyuridine 5'-triphosphate nucleotidohydrolase.